Consider the following 444-residue polypeptide: Phosphoglucosamine mutase (444 aa).

Ser-101 functions as the Phosphoserine intermediate in the catalytic mechanism. Mg(2+)-binding residues include Ser-101, Asp-240, Asp-242, and Asp-244. Ser-101 is modified (phosphoserine).

It belongs to the phosphohexose mutase family. Mg(2+) serves as cofactor. In terms of processing, activated by phosphorylation.

The catalysed reaction is alpha-D-glucosamine 1-phosphate = D-glucosamine 6-phosphate. In terms of biological role, catalyzes the conversion of glucosamine-6-phosphate to glucosamine-1-phosphate. The chain is Phosphoglucosamine mutase from Photobacterium profundum (strain SS9).